The primary structure comprises 586 residues: Penicillin-binding protein activator LpoA (586 aa).

The first 26 residues, 1–26 (MLSILMQGLRLKKCFLPILVMFFLAG), serve as a signal peptide directing secretion. The N-palmitoyl cysteine moiety is linked to residue C27. C27 is lipidated: S-diacylglycerol cysteine.

This sequence belongs to the LpoA family. Interacts with PBP1a.

The protein localises to the cell outer membrane. Its function is as follows. Regulator of peptidoglycan synthesis that is essential for the function of penicillin-binding protein 1A (PBP1a). The protein is Penicillin-binding protein activator LpoA of Histophilus somni (strain 2336) (Haemophilus somnus).